Consider the following 143-residue polypeptide: Ribonuclease P protein component (143 aa).

The interval 111 to 143 (RVKRKGGGPGGNRRSAPPGSAPLTDDGRLRGEP) is disordered.

Belongs to the RnpA family. In terms of assembly, consists of a catalytic RNA component (M1 or rnpB) and a protein subunit.

The enzyme catalyses Endonucleolytic cleavage of RNA, removing 5'-extranucleotides from tRNA precursor.. In terms of biological role, RNaseP catalyzes the removal of the 5'-leader sequence from pre-tRNA to produce the mature 5'-terminus. It can also cleave other RNA substrates such as 4.5S RNA. The protein component plays an auxiliary but essential role in vivo by binding to the 5'-leader sequence and broadening the substrate specificity of the ribozyme. The chain is Ribonuclease P protein component from Deinococcus geothermalis (strain DSM 11300 / CIP 105573 / AG-3a).